The sequence spans 198 residues: MALITRKSFILVGVPPIMKSLIPIVLATLVILGMGCIGGGEEKMSLKVSSVFGNNEFIPAKYTCEGVDINPPLKIEGLSDNVKSLVIIVDDPDAPMGTFTHWIAWNIPPVTEIPEGIPKQGEVDKPIHIIQGRNDFGRIGYNGPCPPRGHGVHHYHFKVYALDTTLNLKPGASRKELEKAMEGHVIQYGELVGLYERK.

The protein belongs to the UPF0098 family.

The protein is UPF0098 protein PH1269 of Pyrococcus horikoshii (strain ATCC 700860 / DSM 12428 / JCM 9974 / NBRC 100139 / OT-3).